Here is a 525-residue protein sequence, read N- to C-terminus: GMP synthase [glutamine-hydrolyzing] (525 aa).

One can recognise a Glutamine amidotransferase type-1 domain in the interval 8–207 (KILILDFGSQ…ALDICECEAN (200 aa)). Cys-85 serves as the catalytic Nucleophile. Active-site residues include His-181 and Glu-183. A GMPS ATP-PPase domain is found at 208–400 (WKPTSIIEDA…LGLPYDMLYR (193 aa)). 235-241 (SGGVDSS) is an ATP binding site.

As to quaternary structure, homodimer.

It catalyses the reaction XMP + L-glutamine + ATP + H2O = GMP + L-glutamate + AMP + diphosphate + 2 H(+). Its pathway is purine metabolism; GMP biosynthesis; GMP from XMP (L-Gln route): step 1/1. Functionally, catalyzes the synthesis of GMP from XMP. This Shewanella sediminis (strain HAW-EB3) protein is GMP synthase [glutamine-hydrolyzing].